A 507-amino-acid polypeptide reads, in one-letter code: Subtilisin-like protease 1 (507 aa).

An N-terminal signal peptide occupies residues 1-19 (MGVFRFISISLAAVSAANA). The propeptide occupies 20 to 116 (AQILSMPHAQ…VEPDTIISVN (97 aa)). The region spanning 34–113 (SYIVMMKDDT…VMFVEPDTII (80 aa)) is the Inhibitor I9 domain. In terms of domain architecture, Peptidase S8 spans 126–400 (SWGLARISNS…NVLISNGGAK (275 aa)). Active-site charge relay system residues include D158 and H190. The disordered stretch occupies residues 175-198 (GSNQVNDGDDRDGSGHGTHTSGTM). A glycan (N-linked (GlcNAc...) asparagine) is linked at N251. Over residues 282 to 294 (NENQDARSSSPAS) the composition is skewed to polar residues. The segment at 282–312 (NENQDARSSSPASEPSVCTVGSSAEDDSRSS) is disordered. S345 functions as the Charge relay system in the catalytic mechanism. Polar residues predominate over residues 378-394 (SSSITDVGPGTPTNVLI). The disordered stretch occupies residues 378–486 (SSSITDVGPG…YPGGDNFDFD (109 aa)). 2 stretches are compositionally biased toward pro residues: residues 405–428 (KPAP…PSQP) and 438–449 (EPFPGEPFPGEP). A compositionally biased stretch (low complexity) spans 450 to 461 (FPGESSPGESAP). Over residues 462–476 (APAPMPPSPQHPHTP) the composition is skewed to pro residues.

This sequence belongs to the peptidase S8 family.

The protein localises to the secreted. In terms of biological role, secreted subtilisin-like serine protease with keratinolytic activity that contributes to pathogenicity. This is Subtilisin-like protease 1 (SUB1) from Trichophyton tonsurans (Scalp ringworm fungus).